We begin with the raw amino-acid sequence, 218 residues long: Elongation factor Ts (218 aa).

The tract at residues 82 to 85 (TDFV) is involved in Mg(2+) ion dislocation from EF-Tu.

This sequence belongs to the EF-Ts family.

It is found in the cytoplasm. Associates with the EF-Tu.GDP complex and induces the exchange of GDP to GTP. It remains bound to the aminoacyl-tRNA.EF-Tu.GTP complex up to the GTP hydrolysis stage on the ribosome. The protein is Elongation factor Ts of Prochlorococcus marinus (strain MIT 9211).